The sequence spans 355 residues: (R,S)-reticuline 7-O-methyltransferase (355 aa).

S-adenosyl-L-methionine contacts are provided by residues 197–200 (VGGG), D221, 221–222 (DL), 241–242 (DM), and K255. The Proton acceptor role is filled by H259.

This sequence belongs to the class I-like SAM-binding methyltransferase superfamily. Cation-independent O-methyltransferase family. In terms of assembly, homodimer. Expressed in capsules, buds and stems, and at lower levels in leaves. Localized to parenchyma cells within the vascular bundle, but only to those cells distal to laticifers. In roots, found in the pericycle within the stele.

It carries out the reaction (S)-reticuline + S-adenosyl-L-methionine = (S)-laudanine + S-adenosyl-L-homocysteine + H(+). It catalyses the reaction (R)-reticuline + S-adenosyl-L-methionine = (R)-laudanine + S-adenosyl-L-homocysteine + H(+). Catalyzes the transfer of a methyl group to reticuline to form laudanine. Methylates the simple catechols guaiacol and isovanillic acid as well as the tetrahydrobenzylisoquinolines (R)-reticuline, (S)-reticuline, (R,S)-orientaline, (R)-protosinomenine and (R,S)-isoorientaline. Involved in the production of laudanine. The chain is (R,S)-reticuline 7-O-methyltransferase from Papaver somniferum (Opium poppy).